Here is a 157-residue protein sequence, read N- to C-terminus: Phosphopantetheine adenylyltransferase (157 aa).

Residue T8 coordinates substrate. Residues 8–9 (TF) and H16 each bind ATP. Substrate is bound by residues K40, T72, and R86. Residues 87-89 (GLR), E97, and 122-128 (YSFLSSS) contribute to the ATP site.

Belongs to the bacterial CoaD family. As to quaternary structure, homohexamer. The cofactor is Mg(2+).

The protein resides in the cytoplasm. It carries out the reaction (R)-4'-phosphopantetheine + ATP + H(+) = 3'-dephospho-CoA + diphosphate. Its pathway is cofactor biosynthesis; coenzyme A biosynthesis; CoA from (R)-pantothenate: step 4/5. In terms of biological role, reversibly transfers an adenylyl group from ATP to 4'-phosphopantetheine, yielding dephospho-CoA (dPCoA) and pyrophosphate. This chain is Phosphopantetheine adenylyltransferase, found in Prochlorococcus marinus (strain MIT 9312).